The primary structure comprises 226 residues: ATP-dependent dethiobiotin synthetase BioD (226 aa).

14 to 19 contributes to the ATP binding site; the sequence is GIGKTF. Threonine 18 is a binding site for Mg(2+). Lysine 39 is a catalytic residue. Serine 43 serves as a coordination point for substrate. ATP contacts are provided by residues aspartate 56, 117–120, 177–178, 206–208, and asparagine 213; these read EGVG, NT, and PHI. Mg(2+) contacts are provided by aspartate 56 and glutamate 117.

Belongs to the dethiobiotin synthetase family. In terms of assembly, homodimer. The cofactor is Mg(2+).

It is found in the cytoplasm. The enzyme catalyses (7R,8S)-7,8-diammoniononanoate + CO2 + ATP = (4R,5S)-dethiobiotin + ADP + phosphate + 3 H(+). It functions in the pathway cofactor biosynthesis; biotin biosynthesis; biotin from 7,8-diaminononanoate: step 1/2. Its function is as follows. Catalyzes a mechanistically unusual reaction, the ATP-dependent insertion of CO2 between the N7 and N8 nitrogen atoms of 7,8-diaminopelargonic acid (DAPA, also called 7,8-diammoniononanoate) to form a ureido ring. This Xylella fastidiosa (strain M12) protein is ATP-dependent dethiobiotin synthetase BioD.